Consider the following 667-residue polypeptide: MNKEQVSKKIESLIELLNQYGYEYYVLDNPTVPDAEYDQKLRELQQLEQDFPDLVMENSPTQRVGGAPLASFQKVTHNVPMLSLGNAFNEQDLRDFARRASNGTDQPISFVCELKIDGLAISLTYENGKFVRGATRGDGTIGEDITSNLKTIRSIPLSIKEQGTLEVRGEAYMPHKSFLALNELREKNEEEPFANPRNAAAGSLRQLDPKIAAKRNLDIFLYGVGEWENSDLTSHSEHLTRLKELGFKTNKEWKKCNTIDEVIEYVNYWTEHRNDLSYEIDGIVIKVDSLDQQEELGFTAKSPRWAIAYKFPAEEAMTTLRDIELSIGRTGVVTPTAILDPVRVAGTTVQRASLHNEDLIREQDIRIGDKVVIKKAGDIIPKVVRSVVEQRNGDEQEFHMPDECPACGNELVRLEEEVALRCINPNCPAQLMEGLIHFVSRNAMNIDGLGEKVIIQLFQENLVQTMADLYRLDKEELLQLERMGEKSVTNLLEAIEKSKENSLERLLFGLGIRFIGSKAAKTLAMEFETMENLQKATYEDVLAIDEIGDKMADSIVQYFAEEKVTELLSNLRELGVQMEYKGPRKSEQATDSVLSGKTVVLTGKMEKFSRKEAKEIIESLGGTVTGSVSKKTDIVIAGEDAGSKLDKAEKLGIDVWSEQQLEDVVGK.

NAD(+) is bound by residues 34–38 (DAEYD), 83–84 (SL), and glutamate 113. The active-site N6-AMP-lysine intermediate is the lysine 115. Arginine 136, glutamate 170, lysine 286, and lysine 310 together coordinate NAD(+). 4 residues coordinate Zn(2+): cysteine 404, cysteine 407, cysteine 422, and cysteine 427. The region spanning 589–667 (ATDSVLSGKT…EQQLEDVVGK (79 aa)) is the BRCT domain.

The protein belongs to the NAD-dependent DNA ligase family. LigA subfamily. It depends on Mg(2+) as a cofactor. The cofactor is Mn(2+).

The enzyme catalyses NAD(+) + (deoxyribonucleotide)n-3'-hydroxyl + 5'-phospho-(deoxyribonucleotide)m = (deoxyribonucleotide)n+m + AMP + beta-nicotinamide D-nucleotide.. In terms of biological role, DNA ligase that catalyzes the formation of phosphodiester linkages between 5'-phosphoryl and 3'-hydroxyl groups in double-stranded DNA using NAD as a coenzyme and as the energy source for the reaction. It is essential for DNA replication and repair of damaged DNA. The protein is DNA ligase of Oceanobacillus iheyensis (strain DSM 14371 / CIP 107618 / JCM 11309 / KCTC 3954 / HTE831).